A 470-amino-acid chain; its full sequence is Auxin transporter-like protein 3 (470 aa).

Over 1–57 (MAAEKIETVVAGNYLEMEREEENISGNKKSSTKTKLSNFFWHGGSVYDAWFSCASNQ) the chain is Cytoplasmic. The chain crosses the membrane as a helical span at residues 58-75 (VAQVLLTLPYSFSQLGMM). The Extracellular segment spans residues 76-77 (SG). Residues 78–98 (ILFQLFYGLMGSWTAYLISVL) traverse the membrane as a helical segment. At 99–134 (YVEYRTRKEREKFDFRNHVIQWFEVLDGLLGKHWRN) the chain is on the cytoplasmic side. Residues 135 to 155 (LGLIFNCTFLLFGSVIQLIAC) traverse the membrane as a helical segment. Over 156–170 (ASNIYYINDKLDKRT) the chain is Extracellular. Residues 171-191 (WTYIFGACCATTVFIPSFHNY) traverse the membrane as a helical segment. Position 192 (arginine 192) is a topological domain, cytoplasmic. The helical transmembrane segment at 193–213 (IWSFLGLAMTTYTSWYLTIAS) threads the bilayer. Residues 214–230 (LLHGQAEDVKHSGPTTM) are Extracellular-facing. Residues 231–251 (VLYFTGATNILYTFGGHAVTV) form a helical membrane-spanning segment. Topologically, residues 252 to 264 (EIMHAMWKPQKFK) are cytoplasmic. The helical transmembrane segment at 265 to 285 (AIYLLATIYVLTLTLPSASAV) threads the bilayer. The Extracellular portion of the chain corresponds to 286 to 312 (YWAFGDKLLTHSNALSLLPKTGFRDTA). Residues 313–333 (VILMLIHQFITFGFASTPLYF) traverse the membrane as a helical segment. Over 334 to 354 (VWEKLIGVHETKSMFKRAMAR) the chain is Cytoplasmic. Residues 355–375 (LPVVVPIWFLAIIFPFFGPIN) form a helical membrane-spanning segment. Residue serine 376 is a topological domain, extracellular. A helical membrane pass occupies residues 377–397 (AVGSLLVSFTVYIIPALAHML). At 398–426 (TFAPAPSRENAVERPPRVVGGWMGTYCIN) the chain is on the cytoplasmic side. A helical membrane pass occupies residues 427-447 (IFVVVWVFVVGFGFGGWASMV). Residues 448-470 (NFVRQIDTFGLFTKCYQCPPHKP) lie on the Extracellular side of the membrane.

This sequence belongs to the amino acid/polyamine transporter 2 family. Amino acid/auxin permease (AAAP) (TC 2.A.18.1) subfamily.

The protein resides in the cell membrane. Functionally, carrier protein involved in proton-driven auxin influx. Mediates the formation of auxin gradient from developing leaves (site of auxin biosynthesis) to tips by contributing to the loading of auxin in vascular tissues and facilitating acropetal (base to tip) auxin transport within inner tissues of the root apex, and basipetal (tip to base) auxin transport within outer tissues of the root apex. The sequence is that of Auxin transporter-like protein 3 (LAX3) from Arabidopsis thaliana (Mouse-ear cress).